The sequence spans 520 residues: 3-phosphoshikimate 1-carboxyvinyltransferase, chloroplastic (520 aa).

The transit peptide at 1–76 (MAQISSMAQG…RISASVATAE (76 aa)) directs the protein to the chloroplast. Lys-99, Ser-100, and Arg-104 together coordinate 3-phosphoshikimate. Position 99 (Lys-99) interacts with phosphoenolpyruvate. The phosphoenolpyruvate site is built by Gly-177 and Arg-207. The 3-phosphoshikimate site is built by Ser-254, Ser-255, Gln-256, Ser-282, Asp-407, and Lys-434. Gln-256 serves as a coordination point for phosphoenolpyruvate. Residue Asp-407 is the Proton acceptor of the active site. Residues Arg-438, Arg-480, and Lys-505 each coordinate phosphoenolpyruvate.

Belongs to the EPSP synthase family.

The protein resides in the plastid. Its subcellular location is the chloroplast. The enzyme catalyses 3-phosphoshikimate + phosphoenolpyruvate = 5-O-(1-carboxyvinyl)-3-phosphoshikimate + phosphate. It participates in metabolic intermediate biosynthesis; chorismate biosynthesis; chorismate from D-erythrose 4-phosphate and phosphoenolpyruvate: step 6/7. Functionally, catalyzes the transfer of the enolpyruvyl moiety of phosphoenolpyruvate (PEP) to the 5-hydroxyl of shikimate-3-phosphate (S3P) to produce enolpyruvyl shikimate-3-phosphate and inorganic phosphate. In Solanum lycopersicum (Tomato), this protein is 3-phosphoshikimate 1-carboxyvinyltransferase, chloroplastic.